A 201-amino-acid polypeptide reads, in one-letter code: Histidinol dehydrogenase (201 aa).

Belongs to the histidinol dehydrogenase family. Homodimer. Zn(2+) serves as cofactor.

It catalyses the reaction L-histidinol + 2 NAD(+) + H2O = L-histidine + 2 NADH + 3 H(+). Its pathway is amino-acid biosynthesis; L-histidine biosynthesis; L-histidine from 5-phospho-alpha-D-ribose 1-diphosphate: step 9/9. Its function is as follows. Catalyzes the sequential NAD-dependent oxidations of L-histidinol to L-histidinaldehyde and then to L-histidine. In Buchnera aphidicola subsp. Melaphis rhois, this protein is Histidinol dehydrogenase (hisD).